A 187-amino-acid polypeptide reads, in one-letter code: Aspartic protease inhibitor 9 (187 aa).

A glycan (N-linked (GlcNAc...) asparagine) is linked at asparagine 19. Disulfide bonds link cysteine 48-cysteine 93 and cysteine 142-cysteine 158.

This sequence belongs to the protease inhibitor I3 (leguminous Kunitz-type inhibitor) family. Glycosylated. Tubers.

The protein localises to the vacuole. In terms of biological role, inhibitor of cathepsin D (aspartic protease) and trypsin (serine protease). May protect the plant by inhibiting proteases of invading organisms. The polypeptide is Aspartic protease inhibitor 9 (Solanum tuberosum (Potato)).